Here is a 311-residue protein sequence, read N- to C-terminus: Methionyl-tRNA formyltransferase (311 aa).

109–112 (SLLP) is a binding site for (6S)-5,6,7,8-tetrahydrofolate.

This sequence belongs to the Fmt family.

It carries out the reaction L-methionyl-tRNA(fMet) + (6R)-10-formyltetrahydrofolate = N-formyl-L-methionyl-tRNA(fMet) + (6S)-5,6,7,8-tetrahydrofolate + H(+). In terms of biological role, attaches a formyl group to the free amino group of methionyl-tRNA(fMet). The formyl group appears to play a dual role in the initiator identity of N-formylmethionyl-tRNA by promoting its recognition by IF2 and preventing the misappropriation of this tRNA by the elongation apparatus. This is Methionyl-tRNA formyltransferase from Moorella thermoacetica (strain ATCC 39073 / JCM 9320).